The primary structure comprises 762 residues: MAIQTSNLGYPRIGLQREWKKTLEAFWSNKIDEEQFLTTMKEIRLKHVKAQQEKGIELIPIGDFTYYDHVLDTAYMLGFIPSRFSEFTSYLDVYFAMARGSKDHVASEMTKWFNTNYHYIVPEYEEGLQISLKDNRPLRLYEEAKQELGVDGKPVILGPYTFLKLAKGYTQEQFATILKQLVAPYVQLLSELHAAGAQIIQVDEPIFASLTKEEVQQAKEIYEAIRKEVPNANLLLQTYFDSVEENYEEIITFPVSSIGLDFIHGKEGNLHAISKYGFPADKTLAVGCIDGRNIWRADLDEVLTLFTTLQKQVQTKNFIVQPSCSLLHTPIDKTEETHLSTELFDALAFANQKLEELVLIHSALTQGTESIRNELETYRNVHHTIRSSAARNREDVKAARTALKEEDFSRPLPFEKRYELQQVALKLPLLPTTTIGSFPQTTEVRQTRKEWRNGVISNEQYEQFIEKETEKWIRYQEEIGLDVLVHGEFERTDMVEYFGERLAGFSFTKNGWVQSYGSRCVKPPVIYGDVAFINGMTIKETVYAQSLTEKVVKGMLTGPVTILNWSFVRNDIPRKEVSYQIALALRHEIELLESSGIRVIQVDEPALREGMPLKEKDWDAYITWAVQSFLLATSSVANETQIHTHMCYSNFEDIVDAIRALDADVISIETSRSHGEFIDTLKHTTYEKGIGLGVYDIHSPRVPSKDEMYKIVEQSLKVCDPKYFWINPDCGLKTRRTEEVIPALEHMVQAAKDARSLLKTNA.

5-methyltetrahydropteroyltri-L-glutamate-binding positions include 17-20 and Lys111; that span reads REWK. Residues 435–437 and Glu488 contribute to the L-homocysteine site; that span reads IGS. L-methionine contacts are provided by residues 435-437 and Glu488; that span reads IGS. Residues 519 to 520 and Trp565 each bind 5-methyltetrahydropteroyltri-L-glutamate; that span reads RC. Asp603 is a binding site for L-homocysteine. Asp603 contacts L-methionine. Residue Glu609 participates in 5-methyltetrahydropteroyltri-L-glutamate binding. Residues His645, Cys647, and Glu669 each coordinate Zn(2+). His698 acts as the Proton donor in catalysis. Position 730 (Cys730) interacts with Zn(2+).

It belongs to the vitamin-B12 independent methionine synthase family. It depends on Zn(2+) as a cofactor.

It catalyses the reaction 5-methyltetrahydropteroyltri-L-glutamate + L-homocysteine = tetrahydropteroyltri-L-glutamate + L-methionine. The protein operates within amino-acid biosynthesis; L-methionine biosynthesis via de novo pathway; L-methionine from L-homocysteine (MetE route): step 1/1. Its function is as follows. Catalyzes the transfer of a methyl group from 5-methyltetrahydrofolate to homocysteine resulting in methionine formation. In Bacillus cereus (strain AH187), this protein is 5-methyltetrahydropteroyltriglutamate--homocysteine methyltransferase.